We begin with the raw amino-acid sequence, 194 residues long: Calcium channel flower (194 aa).

Residues 1–34 (MSFAEKITGLLARPNQQDPIGPEQPWYLKYGSRL) are Cytoplasmic-facing. Residues 35 to 55 (LGIVAAFFAILFGLWNVFSII) form a helical membrane-spanning segment. At 56-65 (TLSVSCLVAG) the chain is on the extracellular side. The chain crosses the membrane as a helical span at residues 66–88 (ILQMVAGFVVMLLEAPCCFVCFG). The Cytoplasmic portion of the chain corresponds to 89 to 106 (QVNEIAEKVESKPLYFRA). A helical membrane pass occupies residues 107–127 (GLYIAMAIPPIILCFGLASLF). Topologically, residues 128–194 (GSGLIFGTGV…TGAVGTDSNV (67 aa)) are extracellular. Important for promoting apoptosis regions lie at residues 135 to 157 (TGVV…RAAA) and 135 to 192 (TGVV…GTDS).

It belongs to the calcium channel flower family. Associates with the dally/ magu complex. In terms of assembly, homomultimer. Associates with the dally/ magu complex. Detected in the imaginal wing disk (at protein level). In terms of tissue distribution, detected throughout the adult brain, including the optic lobe but, at much lower levels of expression than isoform Lose-A. As to expression, detected in the optic lobe (at protein level). Detected throughout the adult brain, including the optic lobe. Expressed in damaged and undamaged optic lobe neurons. Expressed in optic lobe neurons, with higher levels of expression in suboptimal neurons. Specifically expressed in injury-damaged optic lobe neurons.

Its subcellular location is the cell membrane. The protein localises to the cytoplasmic vesicle. It localises to the secretory vesicle. The protein resides in the synaptic vesicle membrane. It is found in the presynaptic cell membrane. Its subcellular location is the endosome. The protein localises to the synaptic vesicle. With respect to regulation, channel activity is inhibited by La(3+), which reduces Ca(2+) influx and thus inhibits it's function in promoting activity-dependent bulk endocytosis (ADBE) in response to high stimuli. Functionally, transmembrane protein which mediates synaptic endocytosis, fitness-based cell culling, neuronal culling, morphogen gradient scaling, and calcium transport. Regulates synaptic endocytosis and hence couples exo- with endocytosis. Controls two major modes of synaptic vesicle (SV) endocytosis in the synaptic boutons of neuromuscular junctions (NMJs); Ca(2+) channel-independent Clathrin-mediated endocytosis (CME) in response to mild stimulation, and Ca(2+) channel-dependent activity-dependent bulk endocytosis (ADBE) in response to strong stimulation. Functions in ADBE and subsequent SV reformation from bulk endosomes by initiating Ca(2+) channel-dependent phosphatidylinositol 4,5-bisphosphate (PtdIns(4,5)P2) compartmentalization in synaptic boutons. There it acts at the periactive zone to provide the low Ca(2+) levels required to initiate Calcineurin activation and upregulate PtdIns(4,5)P2. Conversely PtdIns(4,5)P2 enhances fwe Ca(2+) channel-activity, establishing a positive feedback loop that induces PtdIns(4,5)P2 microdomain at the periactive zone. These microdomains trigger bulk membrane invagination (i.e. ADBE) by triggering actin polymerization while also promoting localization of fwe to bulk endosomes, thereby removing the ADBE trigger to reduce endocytosis and prevent excess membrane uptake. PtdIns(4,5)P2 then promotes SV reformation from the bulk endosomes, to coordinate ADBE and subsequent SV reformation. Different combinations of the flower isoforms at the cell membrane are also required for the identification and elimination of suboptimal or supernumerary cells during development, regeneration, and adulthood. Required for the recognition and elimination of unfit cells in the developing wing during cell competition. Also required for efficient identification and elimination of injured, damaged and/or dysfunctional neurons during regeneration of the adult brain. In the developing pupal retina, mediates the elimination of unwanted postmitotic neurons, including supernumerary photoreceptor neurons that form at the periphery of the retina and are contained within incomplete ommatidia units. Downstream of the flower fitness fingerprints, cells identified as unwanted or unfit are eliminated via apoptosis through the expression of ahuizotl (azot). However, the cells marked for elimination by the flower isoforms only undergo apoptosis if additional thresholds are met; (1) their neighboring fit/healthy cells express different levels of the fwe isoforms, and (2) the levels of the protective signal SPARC expressed by the loser or unwanted cells are unable to inhibit caspase activation. These additional thresholds for flower-mediated apoptosis, allows useful cells to recover from transient and limited stress before they are unnecessarily eliminated. Functions with dally and magu in a mechanism of scaling, which utilises apoptosis to ensure that the dpp morphogen gradient, which mediates organ growth, remains proportional to the size of the growing wing. In this mechanism, fwe represses dally- and Magu-dependent activity in expanding the gradient, and dally/Magu inhibits fwe-dependent apoptosis to keep cell death rate low. When the levels of these different proteins are optimally regulated the gradient correctly scales with organ growth but when this fails, fwe-mediated apoptosis is activated to trim the developing tissue to match the correct size of the gradient. In terms of biological role, functions with the other flower isoforms to produce tissue-specific fitness fingerprints that identify unfit or fit cells during cell selection processes in order to maintain tissue health. In the wing imaginal disk, this isoform is highly expressed in healthy/normal cells but is down-regulated in cells with decreased fitness. During cell competition, if levels of this isoform in unfit cells is lower than in the surrounding neighboring cells, the suboptimal cells are recognized as 'loser' cells, and undergo elimination via apoptosis to be replaced by the surrounding healthy 'winner' cell population. Functions with the other flower isoforms to produce tissue-specific fitness fingerprints that identify unfit or fit cells during cell selection processes in order to maintain tissue health. In the wing imaginal disk, this isoform displays low levels of expression in healthy/normal cells but is up-regulated in cells with decreased fitness. During cell competition, if levels of this isoform in unfit cells is higher than in the surrounding neighboring cells, the suboptimal cells are recognized as 'loser' cells, and undergo elimination via apoptosis to be replaced by the surrounding healthy 'winner' cell population. Its function is as follows. Functions with the other flower isoforms to produce tissue-specific fitness fingerprints that identify unfit cells for cell selection processes during development, regeneration, and to maintain tissue health. During cell competition in certain tissues, marks suboptimal or damaged cells as 'loser' cells. In cells of the wing imaginal disk and damaged or dysfunctional neurons in the adult optic lobe, this isoform displays low to no expression in healthy/normal cells but is up-regulated in cells with decreased fitness or damage-affected neurons. During cell competition, if levels of this isoform in unfit cells is higher than in the surrounding neighboring cells, the suboptimal cells are recognized as 'loser' cells, and undergo elimination via apoptosis to be replaced by the surrounding healthy/undamaged 'winner' cell population. In the developing pupal retina, also required for the recognition and elimination of postmitotic neurons, including supernumerary photoreceptor neurons that form at the periphery of the retina and are contained within incomplete ommatidia units. Activity at the peripheral retina is induced by the wg signaling pathway but, once activated, it promotes apoptosis of supernumerary photoreceptor neurons independently of wg signaling and snail function. The polypeptide is Calcium channel flower (fwe) (Drosophila melanogaster (Fruit fly)).